A 391-amino-acid polypeptide reads, in one-letter code: Pectate lyase D (391 aa).

An N-terminal signal peptide occupies residues 1-31 (MNNTRVSFRSTKSLLAAIIATSMMTWSVNRA). 2 residues coordinate Ca(2+): aspartate 170 and aspartate 213. Arginine 266 is a catalytic residue.

Belongs to the polysaccharide lyase 1 family. PLBC subfamily. Ca(2+) is required as a cofactor.

The protein resides in the secreted. It catalyses the reaction Eliminative cleavage of (1-&gt;4)-alpha-D-galacturonan to give oligosaccharides with 4-deoxy-alpha-D-galact-4-enuronosyl groups at their non-reducing ends.. It participates in glycan metabolism; pectin degradation; 2-dehydro-3-deoxy-D-gluconate from pectin: step 2/5. Involved in maceration and soft-rotting of plant tissue. The sequence is that of Pectate lyase D (pelD) from Dickeya chrysanthemi (Pectobacterium chrysanthemi).